A 240-amino-acid polypeptide reads, in one-letter code: Intestine-specific homeobox (240 aa).

The disordered stretch occupies residues 36-82 (PTERRSLPRPQSICKEDSRQTTIPGSKLERPPQDQPQEEKKNKRRVR). Positions 62-76 (KLERPPQDQPQEEKK) are enriched in basic and acidic residues. A DNA-binding region (homeobox) is located at residues 78–137 (KRRVRTTFTTEQLQELEKLFHFTHYPDIHVRSQLASRINLPEARVQIWFQNQRAKWRKQE).

In terms of tissue distribution, expressed in intestinal epithelial cells from the duodenum to the proximal colon.

The protein resides in the nucleus. Transcription factor that regulates gene expression in intestine. May participate in vitamin A metabolism most likely by regulating BCO1 expression in the intestine. This is Intestine-specific homeobox (Isx) from Mus musculus (Mouse).